A 690-amino-acid polypeptide reads, in one-letter code: Probable serine/threonine-protein kinase drkB (690 aa).

The N-terminal stretch at 1–24 (MKVQIVFFSITVFIFVLFLLSVES) is a signal peptide. The tract at residues 51-110 (DSKSSEHTTSSSSSSNSKNKGDSSSSSSNSGSSSNSIISGDSNSKDAPTTSSDSLSPATP) is disordered. Over residues 57–96 (HTTSSSSSSNSKNKGDSSSSSSNSGSSSNSIISGDSNSKD) the composition is skewed to low complexity. A compositionally biased stretch (polar residues) spans 97 to 107 (APTTSSDSLSP). 4 N-linked (GlcNAc...) asparagine glycosylation sites follow: Asn134, Asn180, Asn220, and Asn250. The disordered stretch occupies residues 287 to 335 (TITPTPTITPTPTITPTVTPTATPSTTPSTTPTTTPSTPTPTPTKSPYS). The segment covering 296–323 (PTPTITPTVTPTATPSTTPSTTPTTTPS) has biased composition (low complexity). Residues 346–366 (IIIASSITGGLLISIFSFVFI) traverse the membrane as a helical segment. Residues 391-644 (IKIGVRIGKG…EQCLEILESI (254 aa)) form the Protein kinase domain. ATP is bound by residues 397-405 (IGKGNFGEV) and Lys418. Asp514 acts as the Proton acceptor in catalysis. The segment at 649-690 (FDDIPVNNNNNNNSNNNENNNENNNNSDNNNNDINYSNRVIN) is disordered. Low complexity predominate over residues 655–681 (NNNNNNNSNNNENNNENNNNSDNNNND).

The protein belongs to the protein kinase superfamily. TKL Ser/Thr protein kinase family.

It localises to the membrane. It carries out the reaction L-seryl-[protein] + ATP = O-phospho-L-seryl-[protein] + ADP + H(+). The enzyme catalyses L-threonyl-[protein] + ATP = O-phospho-L-threonyl-[protein] + ADP + H(+). This Dictyostelium discoideum (Social amoeba) protein is Probable serine/threonine-protein kinase drkB (drkB).